Consider the following 482-residue polypeptide: Putative fatty acid desaturase 2-like protein FADS2B (482 aa).

The interval 1-31 is disordered; it reads MKFEEKCGDNGSIVGRNQSYPGEKHQPKGKP. At 1 to 167 the chain is on the cytoplasmic side; it reads MKFEEKCGDN…EAMNMFHANL (167 aa). Residues 56–132 form the Cytochrome b5 heme-binding domain; that stretch reads LSMYTWLEIQ…LKPLLIGELA (77 aa). Positions 90 and 113 each coordinate heme. The helical transmembrane segment at 168–188 threads the bilayer; that stretch reads GFFFLHFVQILILEVLAWLIV. Over 189–190 the chain is Lumenal; that stretch reads YH. A helical transmembrane segment spans residues 191 to 211; sequence FGSGWPVTMFISFLLTISQAS. Topologically, residues 212–305 are cytoplasmic; it reads SSFLQHDAGH…YEEQHLYFYK (94 aa). A Histidine box-1 motif is present at residues 217–221; that stretch reads HDAGH. Residues 254-258 carry the Histidine box-2 motif; it reads HFEQH. A helical membrane pass occupies residues 306–326; that stretch reads VWLPLFMPVYLKLPSMQAMYL. Topologically, residues 327–343 are lumenal; the sequence is QRYWVCFSLQDITWVSS. Residues 344-364 form a helical membrane-spanning segment; that stretch reads FYIYFITFGLYYGIFGTMLLI. Over 365–482 the chain is Cytoplasmic; the sequence is YLVKFLESPW…AALWADAYYE (118 aa). Positions 421–425 match the Histidine box-3 motif; the sequence is QIEHH.

Belongs to the fatty acid desaturase type 1 family.

Its subcellular location is the endoplasmic reticulum membrane. Its pathway is lipid metabolism; polyunsaturated fatty acid biosynthesis. The polypeptide is Putative fatty acid desaturase 2-like protein FADS2B (Homo sapiens (Human)).